Reading from the N-terminus, the 93-residue chain is Chromosomal protein MC1 (93 aa).

The disordered stretch occupies residues 1 to 43; that stretch reads SNTRNFVLRDEEGNEHGVFTGKQPRQAALKAANRGDGTKSNPD.

Functionally, protects DNA against thermal denaturation and modulates transcription. The polypeptide is Chromosomal protein MC1 (Methanosarcina barkeri).